We begin with the raw amino-acid sequence, 405 residues long: Acetate kinase (405 aa).

A Mg(2+)-binding site is contributed by Asn7. Lys14 contributes to the ATP binding site. Arg98 contributes to the substrate binding site. Asp155 functions as the Proton donor/acceptor in the catalytic mechanism. Residues 214 to 218 (HLGNG), 289 to 291 (DLR), and 337 to 341 (GVGEN) each bind ATP. Glu390 contacts Mg(2+).

The protein belongs to the acetokinase family. In terms of assembly, homodimer. Mg(2+) is required as a cofactor. Mn(2+) serves as cofactor.

The protein localises to the cytoplasm. It carries out the reaction acetate + ATP = acetyl phosphate + ADP. It participates in metabolic intermediate biosynthesis; acetyl-CoA biosynthesis; acetyl-CoA from acetate: step 1/2. In terms of biological role, catalyzes the formation of acetyl phosphate from acetate and ATP. Can also catalyze the reverse reaction. This chain is Acetate kinase, found in Gloeothece citriformis (strain PCC 7424) (Cyanothece sp. (strain PCC 7424)).